The primary structure comprises 413 residues: uncharacterized protein (413 aa).

The next 12 membrane-spanning stretches (helical) occupy residues 42–62 (FLGG…LPVF), 75–95 (LSLS…GPLS), 109–129 (LIAA…VIVF), 133–153 (LTGL…VEEV), 157–179 (SVSF…GRIL), 191–211 (IAFI…LYFL), 238–258 (PTLL…ITIF), 265–285 (LMLS…IIYL), 304–324 (SSIL…TQYN), 326–346 (IFII…SHSI), 362–382 (ATSL…TFGG), and 383–403 (FFWF…ILIF).

The protein belongs to the major facilitator superfamily.

It localises to the cell membrane. This is an uncharacterized protein from Buchnera aphidicola subsp. Schizaphis graminum (strain Sg).